A 28-amino-acid polypeptide reads, in one-letter code: M-poneritoxin-Da4b (28 aa).

Alanine 28 is subject to Alanine amide.

In terms of tissue distribution, expressed by the venom gland.

The protein resides in the secreted. Functionally, the synthetic peptide has antimicrobial activity against the Gram-positive bacteria B.amyloliquefacies S499 (MIC=0.05 mM), L.monocytogenes 2231 and S.aureus ATCC 29213, against the Gram-negative bacteria P.putida BTP1, P.aeruginosa PaO1 and E.coli ATCC 10536, and against the fungi S.cerevisiae, R.mucilaginosa and C.cucumerinum. It is not active against the fungi F.oxysporum and B.cinerea. The chain is M-poneritoxin-Da4b from Dinoponera australis (Giant neotropical hunting ant).